We begin with the raw amino-acid sequence, 418 residues long: AP-3 complex subunit mu-1 (418 aa).

Residues 176 to 417 enclose the MHD domain; that stretch reads NNEAYFDVVE…VTKAGKFQVR (242 aa).

This sequence belongs to the adaptor complexes medium subunit family. In terms of assembly, adaptor protein complex 3 (AP-3) is a heterotetramer composed of two large adaptins (delta-type subunit AP3D1 and beta-type subunit AP3B1 or AP3B2), a medium adaptin (mu-type subunit AP3M1 or AP3M2) and a small adaptin (sigma-type subunit APS1 or AP3S2). Interacts with AGAP1. AP-3 associates with the BLOC-1 complex. (Microbial infection) Interacts with human respiratory virus (HRSV) matrix protein; this interaction plays an essential role in trafficking the matrix protein in host cells.

It is found in the golgi apparatus. Its subcellular location is the cytoplasmic vesicle membrane. Part of the AP-3 complex, an adaptor-related complex which is not clathrin-associated. The complex is associated with the Golgi region as well as more peripheral structures. It facilitates the budding of vesicles from the Golgi membrane and may be directly involved in trafficking to lysosomes. In concert with the BLOC-1 complex, AP-3 is required to target cargos into vesicles assembled at cell bodies for delivery into neurites and nerve terminals. The polypeptide is AP-3 complex subunit mu-1 (AP3M1) (Homo sapiens (Human)).